The primary structure comprises 552 residues: Phosphoglucomutase (552 aa).

Serine 143 (phosphoserine intermediate) is an active-site residue. Mg(2+) is bound by residues serine 143, aspartate 295, aspartate 297, and aspartate 299.

Belongs to the phosphohexose mutase family. Mg(2+) serves as cofactor.

The catalysed reaction is alpha-D-glucose 1-phosphate = alpha-D-glucose 6-phosphate. Its pathway is glycolipid metabolism; diglucosyl-diacylglycerol biosynthesis. In terms of biological role, catalyzes the interconversion between glucose-6-phosphate and alpha-glucose-1-phosphate. This is the first step in the biosynthesis of diglucosyl-diacylglycerol (Glc2-DAG), i.e. the predominant glycolipid found in the S.aureus membrane, which is also used as a membrane anchor for lipoteichoic acid (LTA). The sequence is that of Phosphoglucomutase (pgcA) from Staphylococcus aureus (strain Mu50 / ATCC 700699).